The following is a 218-amino-acid chain: E3 ubiquitin-protein ligase MARCHF3 (218 aa).

The RING-CH-type zinc finger occupies 63–123 (SPFNDRPMCR…ELCHFRFAVE (61 aa)). Residues C71, C74, C87, C89, H97, C100, C113, and C116 each coordinate Zn(2+). 2 consecutive transmembrane segments (helical) span residues 145–165 (LFGD…SGWL) and 180–200 (LEAV…LFWT).

In terms of assembly, interacts with MARCHF2 and STX6.

It is found in the cytoplasmic vesicle membrane. The protein localises to the early endosome membrane. The enzyme catalyses S-ubiquitinyl-[E2 ubiquitin-conjugating enzyme]-L-cysteine + [acceptor protein]-L-lysine = [E2 ubiquitin-conjugating enzyme]-L-cysteine + N(6)-ubiquitinyl-[acceptor protein]-L-lysine.. It participates in protein modification; protein ubiquitination. In terms of biological role, E3 ubiquitin-protein ligase which may be involved in endosomal trafficking. E3 ubiquitin ligases accept ubiquitin from an E2 ubiquitin-conjugating enzyme in the form of a thioester and then directly transfer the ubiquitin to targeted substrates. The chain is E3 ubiquitin-protein ligase MARCHF3 (Marchf3) from Mus musculus (Mouse).